Here is a 354-residue protein sequence, read N- to C-terminus: MAQKIRVLIVDDSAVIRKLLEKIFSSCADIEVVGTASDPYIARDKLVALKPDVMTLDVEMPRMDGISFLEKVMQHFPTRTIIFSSLAKTGSETYLRALEAGAIEIMEKPSIDVSQSLETLSAAIIEKVKAVAKARINPIKAVVPNPGAPVQKVASTSLARTTHQLLAVASSTGGTEALKVFLSGMPADIPGTLVVQHMPPGFTKSFAENLDKMFPFEVKEAQEGDQVVPGRVLIAPGNYHMEITRSGAFYYVKLHQGPALHSVRPAADYLMKSVAKYVGKNAMGVVLTGMGKDGAEGLLEMKNAGAYTVAQNEETCVVYGMPAAAVALGAADKVLPLDRIAGDLLKQLQTRNAA.

The 118-residue stretch at 6-123 (RVLIVDDSAV…SQSLETLSAA (118 aa)) folds into the Response regulatory domain. Aspartate 57 is subject to 4-aspartylphosphate. One can recognise a CheB-type methylesterase domain in the interval 159 to 351 (ARTTHQLLAV…GDLLKQLQTR (193 aa)). Catalysis depends on residues serine 171, histidine 197, and aspartate 293.

This sequence belongs to the CheB family. Phosphorylated by CheA. Phosphorylation of the N-terminal regulatory domain activates the methylesterase activity.

Its subcellular location is the cytoplasm. It carries out the reaction [protein]-L-glutamate 5-O-methyl ester + H2O = L-glutamyl-[protein] + methanol + H(+). The enzyme catalyses L-glutaminyl-[protein] + H2O = L-glutamyl-[protein] + NH4(+). In terms of biological role, involved in chemotaxis. Part of a chemotaxis signal transduction system that modulates chemotaxis in response to various stimuli. Catalyzes the demethylation of specific methylglutamate residues introduced into the chemoreceptors (methyl-accepting chemotaxis proteins or MCP) by CheR. Also mediates the irreversible deamidation of specific glutamine residues to glutamic acid. In Bdellovibrio bacteriovorus (strain ATCC 15356 / DSM 50701 / NCIMB 9529 / HD100), this protein is Protein-glutamate methylesterase/protein-glutamine glutaminase.